The chain runs to 1478 residues: Phospholipase B1, membrane-associated (1478 aa).

The signal sequence occupies residues 1–27 (MELYPGVSPVGLLLLLLLGQGPSQIHG). The Extracellular portion of the chain corresponds to 28-1422 (SSGENTLAWQ…KAEEPSNALY (1395 aa)). Repeat copies occupy residues 43-351 (WTLK…YKNS), 366-711 (MKEG…TKNS), 712-1058 (NLGN…FRNS), and 1068-1407 (IENW…LRNS). Residues 43–1407 (WTLKNFPFPC…RPFLYTLRNS (1365 aa)) form a 4 X 308-326 AA approximate repeats region. A glycan (N-linked (GlcNAc...) asparagine) is linked at Asn-180. Active-site residues include Ser-404 and Asp-518. N-linked (GlcNAc...) asparagine glycosylation is found at Asn-525, Asn-626, and Asn-637. His-659 is a catalytic residue. Residues Asn-715, Asn-764, Asn-787, Asn-801, Asn-830, Asn-926, Asn-1227, Asn-1280, Asn-1289, and Asn-1387 are each glycosylated (N-linked (GlcNAc...) asparagine). Residues 1408–1450 (QLLPDKAEEPSNALYWAVPVAAIGGLAVGILGVMLWRTVKPVQ) form a necessary for membrane localization region. The helical transmembrane segment at 1423-1443 (WAVPVAAIGGLAVGILGVMLW) threads the bilayer. Residues 1444–1478 (RTVKPVQQEEEEEDTLPNTSVTQDAVSEKRLKAGN) are Cytoplasmic-facing. Positions 1451-1478 (QEEEEEDTLPNTSVTQDAVSEKRLKAGN) are disordered. A compositionally biased stretch (polar residues) spans 1459–1468 (LPNTSVTQDA). Residues 1469–1478 (VSEKRLKAGN) show a composition bias toward basic and acidic residues.

The protein belongs to the 'GDSL' lipolytic enzyme family. Phospholipase B1 subfamily. In terms of processing, undergoes proteolytic cleavage in the ileum.

It is found in the apical cell membrane. It carries out the reaction a 1,2-diacyl-sn-glycero-3-phosphocholine + H2O = a 1-acyl-sn-glycero-3-phosphocholine + a fatty acid + H(+). The enzyme catalyses a 1-O-alkyl-2-acyl-sn-glycero-3-phosphocholine + H2O = a 1-O-alkyl-sn-glycero-3-phosphocholine + a fatty acid + H(+). The catalysed reaction is a 1-acyl-sn-glycero-3-phosphocholine + H2O = sn-glycerol 3-phosphocholine + a fatty acid + H(+). It catalyses the reaction a triacylglycerol + H2O = a diacylglycerol + a fatty acid + H(+). It carries out the reaction 1,2-dihexadecanoyl-sn-glycero-3-phosphocholine + H2O = 1-hexadecanoyl-sn-glycero-3-phosphocholine + hexadecanoate + H(+). The enzyme catalyses 1-hexadecanoyl-2-(9Z-octadecenoyl)-sn-glycero-3-phosphocholine + H2O = 1-hexadecanoyl-sn-glycero-3-phosphocholine + (9Z)-octadecenoate + H(+). The catalysed reaction is 1,2-di-(9Z-octadecenoyl)-sn-glycero-3-phosphocholine + H2O = 1-(9Z-octadecenoyl)-sn-glycero-3-phosphocholine + (9Z)-octadecenoate + H(+). It catalyses the reaction 1-hexadecanoyl-2-(9Z,12Z-octadecadienoyl)-sn-glycero-3-phosphocholine + H2O = (9Z,12Z)-octadecadienoate + 1-hexadecanoyl-sn-glycero-3-phosphocholine + H(+). It carries out the reaction 1-hexadecanoyl-2-(9Z,12Z-octadecadienoyl)-sn-glycero-3-phosphocholine + H2O = 2-(9Z,12Z-octadecadienoyl)-sn-glycero-3-phosphocholine + hexadecanoate + H(+). The enzyme catalyses 1-hexadecanoyl-2-(9Z-octadecenoyl)-sn-glycero-3-phosphoethanolamine + H2O = 1-hexadecanoyl-sn-glycero-3-phosphoethanolamine + (9Z)-octadecenoate + H(+). The catalysed reaction is 1-hexadecanoyl-2-(9Z-octadecenoyl)-sn-glycero-3-phospho-(1'-sn-glycerol) + H2O = 1-hexadecanoyl-sn-glycero-3-phospho-(1'-sn-glycerol) + (9Z)-octadecenoate + H(+). It catalyses the reaction 1,2-dihexadecanoyl-sn-glycero-3-phosphocholine + 2 H2O = sn-glycerol 3-phosphocholine + 2 hexadecanoate + 2 H(+). It carries out the reaction 1-O-hexadecyl-2-(9Z)-octadecenoyl-sn-glycero-3-phosphocholine + H2O = 1-O-hexadecyl-sn-glycero-3-phosphocholine + (9Z)-octadecenoate + H(+). The enzyme catalyses 1-hexadecanoyl-sn-glycero-3-phosphocholine + H2O = sn-glycerol 3-phosphocholine + hexadecanoate + H(+). The catalysed reaction is 1,2,3-tri-(9Z-octadecenoyl)-glycerol + H2O = di-(9Z)-octadecenoylglycerol + (9Z)-octadecenoate + H(+). It catalyses the reaction 1-hexadecanoyl-2-(9Z)-octadecenoyl-3-octadecanoyl-sn-glycerol + H2O = 1-hexadecanoyl-2-(9Z-octadecenoyl)-sn-glycerol + octadecanoate + H(+). It carries out the reaction 1,3-dihexadecanoyl-2-(9Z-octadecenoyl)glycerol + H2O = 1,3-dihexadecanoylglycerol + (9Z)-octadecenoate + H(+). The enzyme catalyses 1,3-dihexadecanoyl-2-(9Z-octadecenoyl)glycerol + H2O = 1-hexadecanoyl-2-(9Z-octadecenoyl)-glycerol + hexadecanoate + H(+). The catalysed reaction is 1-hexadecanoyl-2-(9Z)-octadecenoyl-3-octadecanoyl-sn-glycerol + H2O = 1-hexadecanoyl-3-octadecanoyl-sn-glycerol + (9Z)-octadecenoate + H(+). It catalyses the reaction 1-hexadecanoyl-2-(9Z)-octadecenoyl-3-octadecanoyl-sn-glycerol + H2O = 2-(9Z-octadecenoyl)-3-octadecanoyl-sn-glycerol + hexadecanoate + H(+). It carries out the reaction 1-octadecanoyl-2-(9Z,12Z)-octadecadienoyl-sn-glycerol + H2O = 1-octadecanoyl-sn-glycerol + (9Z,12Z)-octadecadienoate + H(+). The enzyme catalyses 1,2-di-(9Z-octadecenoyl)-sn-glycerol + H2O = 1-(9Z-octadecenoyl)-sn-glycerol + (9Z)-octadecenoate + H(+). The catalysed reaction is 2,3-di-(9Z)-octadecenoyl-sn-glycerol + H2O = 3-(9Z-octadecenoyl)-sn-glycerol + (9Z)-octadecenoate + H(+). It catalyses the reaction 1,3-di-(9Z-octadecenoyl)-glycerol + H2O = 1-(9Z-octadecenoyl)-glycerol + (9Z)-octadecenoate + H(+). It carries out the reaction 1-(9Z-octadecenoyl)-glycerol + H2O = glycerol + (9Z)-octadecenoate + H(+). The enzyme catalyses 2-(9Z-octadecenoyl)-glycerol + H2O = glycerol + (9Z)-octadecenoate + H(+). In terms of biological role, calcium-independent membrane-associated phospholipase that catalyzes complete diacylation of phospholipids by hydrolyzing both sn-1 and sn-2 fatty acyl chains attached to the glycerol backbone (phospholipase B activity). Has dual phospholipase and lysophospholipase activities toward diacylphospholipids. Preferentially cleaves sn-2 ester bonds over sn-1 bonds. Acts as a lipase toward glycerolipid substrates. Hydrolyzes fatty acyl chains of diacylglycerols with preference for the sn-2 position and of triacylglycerols with not positional selectivity. May also hydrolyze long chain retinyl esters such as retinyl palmitate. May contribute to digestion of dietary phospholipids, glycerolipids and retinoids, facilitating lipid absorption at the brush border. The protein is Phospholipase B1, membrane-associated (Plb1) of Mus musculus (Mouse).